The following is a 31-amino-acid chain: Photosystem II reaction center protein T (31 aa).

A helical membrane pass occupies residues 3 to 23 (AFSYVLILTLALVTLFFAVAF).

The protein belongs to the PsbT family. In terms of assembly, PSII is composed of 1 copy each of membrane proteins PsbA, PsbB, PsbC, PsbD, PsbE, PsbF, PsbH, PsbI, PsbJ, PsbK, PsbL, PsbM, PsbT, PsbX, PsbY, Psb30/Ycf12, peripheral proteins PsbO, CyanoQ (PsbQ), PsbU, PsbV and a large number of cofactors. It forms dimeric complexes.

The protein resides in the cellular thylakoid membrane. Its function is as follows. Found at the monomer-monomer interface of the photosystem II (PS II) dimer, plays a role in assembly and dimerization of PSII. PSII is a light-driven water plastoquinone oxidoreductase, using light energy to abstract electrons from H(2)O, generating a proton gradient subsequently used for ATP formation. This Prochlorococcus marinus (strain NATL2A) protein is Photosystem II reaction center protein T.